Here is a 735-residue protein sequence, read N- to C-terminus: Exocyst complex component 7 (735 aa).

Coiled-coil stretches lie at residues 5–42 and 63–85; these read QEASARRREIEDKLKQEEETLSFIRDSLEKSDQLTKNM and VHKQTENLQRLQENVEKTLSCLD. S133 is subject to Phosphoserine. A disordered region spans residues 239 to 268; the sequence is HKSSSSSGVPYSPAIPNKRKDTPTKKPVKR.

This sequence belongs to the EXO70 family. The exocyst complex is composed of EXOC1, EXOC2, EXOC3, EXOC4, EXOC5, EXOC6, EXOC7 and EXOC8. Interacts with ARHQ in a GTP-dependent manner. Interacts with RAB11FIP3. As to expression, abundant in the ventricular zone, the outer subventricular zone and the cortical plate of the fetal cortex.

Its subcellular location is the cytoplasm. It localises to the cytosol. It is found in the cell membrane. The protein localises to the midbody. The protein resides in the midbody ring. Component of the exocyst complex involved in the docking of exocytic vesicles with fusion sites on the plasma membrane. In adipocytes, plays a crucial role in targeting SLC2A4 vesicle to the plasma membrane in response to insulin, perhaps directing the vesicle to the precise site of fusion. It is required for neuron survival and plays an essential role in cortical development. The sequence is that of Exocyst complex component 7 (EXOC7) from Homo sapiens (Human).